The primary structure comprises 95 residues: Aspartyl/glutamyl-tRNA(Asn/Gln) amidotransferase subunit C (95 aa).

This sequence belongs to the GatC family. As to quaternary structure, heterotrimer of A, B and C subunits.

The catalysed reaction is L-glutamyl-tRNA(Gln) + L-glutamine + ATP + H2O = L-glutaminyl-tRNA(Gln) + L-glutamate + ADP + phosphate + H(+). It carries out the reaction L-aspartyl-tRNA(Asn) + L-glutamine + ATP + H2O = L-asparaginyl-tRNA(Asn) + L-glutamate + ADP + phosphate + 2 H(+). Allows the formation of correctly charged Asn-tRNA(Asn) or Gln-tRNA(Gln) through the transamidation of misacylated Asp-tRNA(Asn) or Glu-tRNA(Gln) in organisms which lack either or both of asparaginyl-tRNA or glutaminyl-tRNA synthetases. The reaction takes place in the presence of glutamine and ATP through an activated phospho-Asp-tRNA(Asn) or phospho-Glu-tRNA(Gln). This Methylococcus capsulatus (strain ATCC 33009 / NCIMB 11132 / Bath) protein is Aspartyl/glutamyl-tRNA(Asn/Gln) amidotransferase subunit C.